Consider the following 253-residue polypeptide: Neurotrophin-3 (253 aa).

An N-terminal signal peptide occupies residues 1–18 (MSILFYVMFLAYLRGVQG). Positions 19–134 (NSMDQRSLPE…AANRTSRRKR (116 aa)) are excised as a propeptide. Residues 62–89 (TLPKAEAPPREPAKSEFQPVTAMGPELL) are disordered. Asn127 carries an N-linked (GlcNAc...) asparagine glycan. Cystine bridges form between Cys148/Cys213, Cys191/Cys242, and Cys201/Cys244.

The protein belongs to the NGF-beta family.

It is found in the secreted. Functionally, seems to promote the survival of visceral and proprioceptive sensory neurons. The sequence is that of Neurotrophin-3 (NTF3) from Bos taurus (Bovine).